The following is a 902-amino-acid chain: Ephrin type-B receptor 1-B (902 aa).

An Eph LBD domain is found at 1–119; sequence HRVYVEMRFT…FFKKCPSVVQ (119 aa). At 1 to 459 the chain is on the extracellular side; sequence HRVYVEMRFT…KSELREQLPL (459 aa). 2 consecutive Fibronectin type-III domains span residues 240 to 350 and 351 to 448; these read VPSG…TNQA and APSS…TEED. N-linked (GlcNAc...) asparagine glycans are attached at residues Asn252, Asn344, and Asn398. Residues 460 to 480 traverse the membrane as a helical segment; sequence IAGSAAAGVVFIVSLVAISIV. At 481-902 the chain is on the cytoplasmic side; sequence CSRKRTYSKE…QISQSPTSIA (422 aa). Residues 537–800 form the Protein kinase domain; that stretch reads VKIEEVIGAG…EIVNTLDKMI (264 aa). Residues 543-551 and Lys569 each bind ATP; that span reads IGAGEFGEV. The active-site Proton acceptor is Asp662. One can recognise an SAM domain in the interval 829–893; it reads SAFTSVDDWL…LNSIQSMRVQ (65 aa). The PDZ-binding motif lies at 900–902; it reads SIA.

Belongs to the protein kinase superfamily. Tyr protein kinase family. Ephrin receptor subfamily. In terms of assembly, heterotetramer upon binding of the ligand. The heterotetramer is composed of an ephrin dimer and a receptor dimer. Oligomerization is probably required to induce biological responses. Phosphorylated. Autophosphorylation is stimulated by ligands. As to expression, expressed in the embryo in the brain and spinal cord and in the first and fourth visceral arches. Most abundant in adult brain, with lower levels in eye, heart, ovary, oviduct, lung and pharynx.

It localises to the cell membrane. The protein resides in the early endosome membrane. The protein localises to the cell projection. Its subcellular location is the dendrite. It carries out the reaction L-tyrosyl-[protein] + ATP = O-phospho-L-tyrosyl-[protein] + ADP + H(+). Its function is as follows. Receptor tyrosine kinase which binds promiscuously transmembrane ephrin-B family ligands residing on adjacent cells, leading to contact-dependent bidirectional signaling into neighboring cells. The signaling pathway downstream of the receptor is referred to as forward signaling while the signaling pathway downstream of the ephrin ligand is referred to as reverse signaling. May play a role in axon guidance during nervous system development. May also play an important redundant role with other ephrin-B receptors in development and maturation of dendritic spines and synapse formation. More generally, may play a role in targeted cell migration and adhesion. Upon activation by ephrin-B ligands activates the MAPK/ERK and the JNK signaling cascades to regulate cell migration and adhesion respectively. This chain is Ephrin type-B receptor 1-B (ephb1-b), found in Xenopus laevis (African clawed frog).